A 504-amino-acid chain; its full sequence is Probable ergothioneine transporter EgtUBC (504 aa).

An ABC transmembrane type-1 domain is found at 19–198 (LVQHIQISFV…LLAILFDFLL (180 aa)). Transmembrane regions (helical) follow at residues 25–44 (ISFV…GIYL), 57–74 (VAAI…GLLI), 81–97 (IVPA…LPIL), 146–170 (MVLI…LILL), 179–198 (LILL…DFLL), and 210–229 (IITI…VPYF). The segment at 231 to 504 (SDKKEITIAG…DYLKDQGIIK (274 aa)) is ergothioneine binding domain.

In the N-terminal section; belongs to the binding-protein-dependent transport system permease family. This sequence in the C-terminal section; belongs to the OsmX family. The complex is probably composed of at least an ATP-binding protein (EgtUA) and a transmembrane protein (EgtUBC).

The protein resides in the membrane. Functionally, part of an ABC transporter complex EgtU required for the uptake of ergothioneine (EGT), a natural low-molecular weight (LMW) thiol antioxidant. Responsible for the translocation of the substrate across the membrane. Also contains a C-terminal periplasmic solute-binding domain (SBD) which binds to EGT with sub-micromolar affinity. Does not bind glycine betaine, carnitine, choline, proline, or cholate. Plays a role in bile acid tolerance. Dispensable for choline uptake. Probably not involved in betaine, carnitine or choline mediated osmo- or chill tolerance. Plays a role in enhancing virulence in mice. The protein is Probable ergothioneine transporter EgtUBC of Listeria monocytogenes serovar 1/2a (strain ATCC BAA-679 / EGD-e).